The sequence spans 418 residues: Serine hydroxymethyltransferase (418 aa).

(6S)-5,6,7,8-tetrahydrofolate contacts are provided by residues Leu-121 and 125 to 127 (GHL). Lys-230 bears the N6-(pyridoxal phosphate)lysine mark. 356 to 358 (SPF) is a (6S)-5,6,7,8-tetrahydrofolate binding site.

The protein belongs to the SHMT family. In terms of assembly, homodimer. The cofactor is pyridoxal 5'-phosphate.

Its subcellular location is the cytoplasm. The catalysed reaction is (6R)-5,10-methylene-5,6,7,8-tetrahydrofolate + glycine + H2O = (6S)-5,6,7,8-tetrahydrofolate + L-serine. The protein operates within one-carbon metabolism; tetrahydrofolate interconversion. It participates in amino-acid biosynthesis; glycine biosynthesis; glycine from L-serine: step 1/1. Its function is as follows. Catalyzes the reversible interconversion of serine and glycine with tetrahydrofolate (THF) serving as the one-carbon carrier. This reaction serves as the major source of one-carbon groups required for the biosynthesis of purines, thymidylate, methionine, and other important biomolecules. Also exhibits THF-independent aldolase activity toward beta-hydroxyamino acids, producing glycine and aldehydes, via a retro-aldol mechanism. This Pseudoalteromonas atlantica (strain T6c / ATCC BAA-1087) protein is Serine hydroxymethyltransferase.